Consider the following 876-residue polypeptide: Alanine--tRNA ligase (876 aa).

Zn(2+) is bound by residues H564, H568, C666, and H670.

This sequence belongs to the class-II aminoacyl-tRNA synthetase family. In terms of assembly, homotetramer. The cofactor is Zn(2+).

Its subcellular location is the cytoplasm. It carries out the reaction tRNA(Ala) + L-alanine + ATP = L-alanyl-tRNA(Ala) + AMP + diphosphate. Its function is as follows. Catalyzes the attachment of alanine to tRNA(Ala) in a two-step reaction: alanine is first activated by ATP to form Ala-AMP and then transferred to the acceptor end of tRNA(Ala). Also edits incorrectly charged Ser-tRNA(Ala) and Gly-tRNA(Ala) via its editing domain. This Salmonella choleraesuis (strain SC-B67) protein is Alanine--tRNA ligase.